Reading from the N-terminus, the 366-residue chain is Flagellar P-ring protein (366 aa).

The N-terminal stretch at 1 to 20 (MVIKFLSALILLLVTTAAQA) is a signal peptide.

This sequence belongs to the FlgI family. In terms of assembly, the basal body constitutes a major portion of the flagellar organelle and consists of four rings (L,P,S, and M) mounted on a central rod.

It is found in the periplasm. The protein localises to the bacterial flagellum basal body. Assembles around the rod to form the L-ring and probably protects the motor/basal body from shearing forces during rotation. The polypeptide is Flagellar P-ring protein (Escherichia coli O1:K1 / APEC).